Here is a 92-residue protein sequence, read N- to C-terminus: UPF0250 protein XF_1271 (92 aa).

Belongs to the UPF0250 family.

The polypeptide is UPF0250 protein XF_1271 (Xylella fastidiosa (strain 9a5c)).